The following is a 90-amino-acid chain: Large ribosomal subunit protein bL27 (90 aa).

A disordered region spans residues 1–21 (MAHKKAGGSSRNGRDSHGKRL).

It belongs to the bacterial ribosomal protein bL27 family.

This Nitrobacter winogradskyi (strain ATCC 25391 / DSM 10237 / CIP 104748 / NCIMB 11846 / Nb-255) protein is Large ribosomal subunit protein bL27.